The chain runs to 74 residues: DNA-directed RNA polymerase subunit omega (74 aa).

Belongs to the RNA polymerase subunit omega family. As to quaternary structure, the RNAP catalytic core consists of 2 alpha, 1 beta, 1 beta' and 1 omega subunit. When a sigma factor is associated with the core the holoenzyme is formed, which can initiate transcription.

The enzyme catalyses RNA(n) + a ribonucleoside 5'-triphosphate = RNA(n+1) + diphosphate. Functionally, promotes RNA polymerase assembly. Latches the N- and C-terminal regions of the beta' subunit thereby facilitating its interaction with the beta and alpha subunits. This chain is DNA-directed RNA polymerase subunit omega, found in Campylobacter jejuni subsp. jejuni serotype O:6 (strain 81116 / NCTC 11828).